Reading from the N-terminus, the 205-residue chain is Thymidine kinase (205 aa).

Residues 9 to 16 and 87 to 90 each bind ATP; these read SAMNAGKS and DECQ. E88 serves as the catalytic Proton acceptor. Zn(2+)-binding residues include C145, C147, C182, and H185.

This sequence belongs to the thymidine kinase family. In terms of assembly, homotetramer.

The protein localises to the cytoplasm. The enzyme catalyses thymidine + ATP = dTMP + ADP + H(+). Allosteric enzyme which is feedback inhibited by dTTP and activated by a number of dNDP and dNTP. In terms of biological role, phosphorylates both thymidine and deoxyuridine. This Escherichia coli O157:H7 protein is Thymidine kinase.